Reading from the N-terminus, the 45-residue chain is Photosystem II reaction center protein K (45 aa).

Residues 1–8 (MELMLLFA) constitute a propeptide that is removed on maturation. Residues 24–44 (LPVIPVLFLALAFVWQASVGF) form a helical membrane-spanning segment.

It belongs to the PsbK family. In terms of assembly, PSII is composed of 1 copy each of membrane proteins PsbA, PsbB, PsbC, PsbD, PsbE, PsbF, PsbH, PsbI, PsbJ, PsbK, PsbL, PsbM, PsbT, PsbX, PsbY, PsbZ, Psb30/Ycf12, peripheral proteins PsbO, CyanoQ (PsbQ), PsbU, PsbV and a large number of cofactors. It forms dimeric complexes.

The protein resides in the cellular thylakoid membrane. One of the components of the core complex of photosystem II (PSII). PSII is a light-driven water:plastoquinone oxidoreductase that uses light energy to abstract electrons from H(2)O, generating O(2) and a proton gradient subsequently used for ATP formation. It consists of a core antenna complex that captures photons, and an electron transfer chain that converts photonic excitation into a charge separation. The chain is Photosystem II reaction center protein K from Cyanothece sp. (strain PCC 7425 / ATCC 29141).